Reading from the N-terminus, the 352-residue chain is Rhodopsin (352 aa).

Topologically, residues 1-36 (MNGTEGPDFYIPFSNKTGVVRSPFEYPQYYLAEPWK) are extracellular. Residues asparagine 2 and asparagine 15 are each glycosylated (N-linked (GlcNAc...) asparagine). A helical membrane pass occupies residues 37 to 61 (YSALAAYMFMLIILGFPINFLTLYV). The Cytoplasmic segment spans residues 62-73 (TVQHKKLRSPLN). Residues 74-96 (YILLNLAVADLFMVLGGFTTTLY) form a helical membrane-spanning segment. The Extracellular portion of the chain corresponds to 97–110 (TSMNGYFVFGVTGC). A disulfide bridge links cysteine 110 with cysteine 187. The helical transmembrane segment at 111-133 (YFEGFFATLGGEVALWCLVVLAI) threads the bilayer. The short motif at 134-136 (ERY) is the 'Ionic lock' involved in activated form stabilization element. The Cytoplasmic portion of the chain corresponds to 134-152 (ERYIVVCKPMSNFRFGENH). Residues 153–173 (AIMGVVFTWIMALTCAAPPLV) traverse the membrane as a helical segment. Topologically, residues 174–202 (GWSRYIPEGMQCSCGVDYYTLKPEVNNES) are extracellular. The chain crosses the membrane as a helical span at residues 203–224 (FVIYMFVVHFAIPLAVIFFCYG). Topologically, residues 225–252 (RLVCTVKEAAAQQQESATTQKAEKEVTR) are cytoplasmic. The chain crosses the membrane as a helical span at residues 253-274 (MVIIMVVSFLICWVPYASVAFY). Topologically, residues 275–286 (IFSNQGSDFGPV) are extracellular. Residues 287–308 (FMTIPAFFAKSSAIYNPVIYIV) traverse the membrane as a helical segment. Residue lysine 296 is modified to N6-(retinylidene)lysine. Topologically, residues 309 to 352 (MNKQFRNCMITTLCCGKNPLGDDETATGSKTETSSVSTSQVSPA) are cytoplasmic. Residues cysteine 322 and cysteine 323 are each lipidated (S-palmitoyl cysteine). Residues 332-352 (ETATGSKTETSSVSTSQVSPA) are disordered. A compositionally biased stretch (low complexity) spans 335–352 (TGSKTETSSVSTSQVSPA).

The protein belongs to the G-protein coupled receptor 1 family. Opsin subfamily. In terms of processing, contains one covalently linked retinal chromophore. Upon light absorption, the covalently bound 11-cis-retinal is converted to all-trans-retinal. After hydrolysis of the Schiff base and release of the covalently bound all-trans-retinal, active rhodopsin is regenerated by binding of a fresh molecule of 11-cis-retinal. As to expression, expressed in rod-shaped photoreceptor cells in the retina that mediate vision in dim ligh (at protein level).

Its subcellular location is the membrane. It localises to the cell projection. The protein localises to the cilium. It is found in the photoreceptor outer segment. Photoreceptor required for image-forming vision at low light intensity. Required for photoreceptor cell viability after birth. Light-induced isomerization of 11-cis to all-trans retinal triggers a conformational change that activates signaling via G-proteins. Subsequent receptor phosphorylation mediates displacement of the bound G-protein alpha subunit by arrestin and terminates signaling. This Alligator mississippiensis (American alligator) protein is Rhodopsin (RHO).